Here is a 425-residue protein sequence, read N- to C-terminus: MRLLLFNQNAFLLACMFVSSVYVNAVLDAYAIENPYISITLTSLLAPLSMLAFLKTPRNSAFALGFFVGALLFYWCALSFRYSDFTYLLPLIIVLIALVYGVLFYLLLYFENPYFRLLSFLGSSFIHPFGFDWLVPDSFFSYSVFRVDKLSLGLVFLACIFLSTKPLKKYRIIGVLLLLGALDFNGFKTSDLKKVGNIELVSTKTPQDLKFDSSYLNDIENNILKEIKLAQSKQKTLIVFPETAYPIALENSPFKAKLEDLSDNIAILIGTLRTQGYNLYNSSFLFSKESVQIADKVILAPFGETMPLPEFLQKPLEKLFFGESTYLYRNAPHFSDFTLDDFTFRPLICYEGTSKPAYSNSPSKIFIVMSNNAWFSPSIEPTLQRTLLKYYARRYDKIILHSANFSTSYILSPSLLGDILFRKRS.

6 helical membrane passes run 12–32 (LLAC…AYAI), 34–54 (NPYI…LAFL), 60–80 (SAFA…ALSF), 88–108 (LLPL…YLLL), 120–140 (FLGS…DSFF), and 142–162 (YSVF…CIFL). In terms of domain architecture, CN hydrolase spans 201–425 (VSTKTPQDLK…LGDILFRKRS (225 aa)). Residue E242 is the Proton acceptor of the active site. Residue K296 is part of the active site. Catalysis depends on C349, which acts as the Nucleophile.

This sequence belongs to the CN hydrolase family. Apolipoprotein N-acyltransferase subfamily.

It localises to the cell inner membrane. The enzyme catalyses N-terminal S-1,2-diacyl-sn-glyceryl-L-cysteinyl-[lipoprotein] + a glycerophospholipid = N-acyl-S-1,2-diacyl-sn-glyceryl-L-cysteinyl-[lipoprotein] + a 2-acyl-sn-glycero-3-phospholipid + H(+). It participates in protein modification; lipoprotein biosynthesis (N-acyl transfer). Functionally, catalyzes the phospholipid dependent N-acylation of the N-terminal cysteine of apolipoprotein, the last step in lipoprotein maturation. This chain is Apolipoprotein N-acyltransferase, found in Helicobacter pylori (strain ATCC 700392 / 26695) (Campylobacter pylori).